Reading from the N-terminus, the 136-residue chain is Protein LITTLE ZIPPER 1 (136 aa).

Residues 97–122 are a coiled coil; that stretch reads ENQNIIRENEKLKKKALLLHQENKTL.

In terms of assembly, interacts with REV. Expressed in the adaxial epidermis of the cotyledons and in the vascular cylinder of wild-type torpedo stage embryos.

Competitive inhibitor of the HD-ZIPIII transcription factors in shoot apical meristem (SAM) development. Acts by forming non-functional heterodimers. Part of a negative feedback loop. Essential for proper functioning of stem cells in the SAM. This Arabidopsis thaliana (Mouse-ear cress) protein is Protein LITTLE ZIPPER 1.